The following is a 157-amino-acid chain: Ribosome maturation factor RimP (157 aa).

The protein belongs to the RimP family.

The protein resides in the cytoplasm. Its function is as follows. Required for maturation of 30S ribosomal subunits. This Geobacillus sp. (strain WCH70) protein is Ribosome maturation factor RimP.